We begin with the raw amino-acid sequence, 46 residues long: Apamin (46 aa).

Residues 1 to 27 (MISMLRCISLFLSVILITGYFVTPVMS) form the signal peptide. Disulfide bonds link C28–C38 and C30–C42. The interval 40 to 41 (RR) is essential for toxin activity. Residue H45 is modified to Histidine amide.

In terms of tissue distribution, expressed by the venom gland.

It localises to the secreted. Its function is as follows. Neurotoxin that blocks voltage-independent calcium-activated potassium channels (KCNN1=SK1, KCNN2=SK2, KCNN3=SK3). The protein is Apamin of Apis cerana cerana (Oriental honeybee).